Here is a 689-residue protein sequence, read N- to C-terminus: DNA topoisomerase 1 (689 aa).

The 111-residue stretch at 3-113 (DNLVIVESPA…KENRVVFNEI (111 aa)) folds into the Toprim domain. Mg(2+) is bound by residues glutamate 9 and aspartate 82. One can recognise a Topo IA-type catalytic domain in the interval 129-557 (EMNLVDAQQA…FFSSFKQDVE (429 aa)). The tract at residues 163 to 168 (SAGRVQ) is interaction with DNA. Tyrosine 298 acts as the O-(5'-phospho-DNA)-tyrosine intermediate in catalysis. Positions 328-357 (SKRKASGKQGDQDAHEAIRPSSTMRTPDDM) are disordered. 3 consecutive C4-type zinc fingers follow at residues 577 to 603 (CEVC…FPDC), 617 to 645 (CPKC…YPEC), and 658 to 681 (CPKC…CSNC).

The protein belongs to the type IA topoisomerase family. As to quaternary structure, monomer. The cofactor is Mg(2+).

It carries out the reaction ATP-independent breakage of single-stranded DNA, followed by passage and rejoining.. Functionally, releases the supercoiling and torsional tension of DNA, which is introduced during the DNA replication and transcription, by transiently cleaving and rejoining one strand of the DNA duplex. Introduces a single-strand break via transesterification at a target site in duplex DNA. The scissile phosphodiester is attacked by the catalytic tyrosine of the enzyme, resulting in the formation of a DNA-(5'-phosphotyrosyl)-enzyme intermediate and the expulsion of a 3'-OH DNA strand. The free DNA strand then undergoes passage around the unbroken strand, thus removing DNA supercoils. Finally, in the religation step, the DNA 3'-OH attacks the covalent intermediate to expel the active-site tyrosine and restore the DNA phosphodiester backbone. This is DNA topoisomerase 1 from Staphylococcus aureus.